The sequence spans 177 residues: Translationally-controlled tumor protein homolog (177 aa).

Residues 1-177 (MIIYRDLFSG…IKQGLVVEKC (177 aa)) form the TCTP domain.

It belongs to the TCTP family.

It localises to the cytoplasm. Involved in calcium binding and microtubule stabilization. The protein is Translationally-controlled tumor protein homolog of Trichinella pseudospiralis (Parasitic roundworm).